We begin with the raw amino-acid sequence, 266 residues long: Signal peptidase I (266 aa).

Over Met-1–Ser-20 the chain is Cytoplasmic. Residues Cys-21–Val-41 traverse the membrane as a helical segment. Topologically, residues Pro-42 to Glu-266 are periplasmic. Catalysis depends on residues Ser-45 and Lys-108.

The protein belongs to the peptidase S26 family.

Its subcellular location is the cell inner membrane. The catalysed reaction is Cleavage of hydrophobic, N-terminal signal or leader sequences from secreted and periplasmic proteins.. This is Signal peptidase I (lepB) from Rickettsia akari (strain Hartford).